The sequence spans 176 residues: Large ribosomal subunit protein eL20 (176 aa).

Lysine 11 is covalently cross-linked (Glycyl lysine isopeptide (Lys-Gly) (interchain with G-Cter in SUMO2)). Position 63 is a phosphotyrosine (tyrosine 63). Serine 71 is modified (phosphoserine). Lysine 76 is subject to N6-succinyllysine. Serine 123 is modified (phosphoserine). Residues lysine 128 and lysine 170 each participate in a glycyl lysine isopeptide (Lys-Gly) (interchain with G-Cter in SUMO2) cross-link.

Belongs to the eukaryotic ribosomal protein eL20 family. In terms of assembly, component of the large ribosomal subunit. Binds IPO9 with high affinity.

It localises to the cytoplasm. Its function is as follows. Component of the large ribosomal subunit. The ribosome is a large ribonucleoprotein complex responsible for the synthesis of proteins in the cell. This chain is Large ribosomal subunit protein eL20 (Rpl18a), found in Mus musculus (Mouse).